Consider the following 312-residue polypeptide: Ribonuclease Z (312 aa).

Zn(2+) contacts are provided by H62, H64, D66, H67, H139, D210, and H268. Residue D66 is the Proton acceptor of the active site.

The protein belongs to the RNase Z family. As to quaternary structure, homodimer. Zn(2+) is required as a cofactor.

The catalysed reaction is Endonucleolytic cleavage of RNA, removing extra 3' nucleotides from tRNA precursor, generating 3' termini of tRNAs. A 3'-hydroxy group is left at the tRNA terminus and a 5'-phosphoryl group is left at the trailer molecule.. In terms of biological role, zinc phosphodiesterase, which displays some tRNA 3'-processing endonuclease activity. Probably involved in tRNA maturation, by removing a 3'-trailer from precursor tRNA. In Crocosphaera subtropica (strain ATCC 51142 / BH68) (Cyanothece sp. (strain ATCC 51142)), this protein is Ribonuclease Z.